The sequence spans 157 residues: Transcriptional repressor NrdR (157 aa).

A zinc finger spans residues 3-34 (CPFCSATDTKVIDSRLVADGHQVRRRRECLLC). Residues 49-139 (PRVVKQDGSR…VYRAFEDVSE (91 aa)) form the ATP-cone domain.

This sequence belongs to the NrdR family. The cofactor is Zn(2+).

In terms of biological role, negatively regulates transcription of bacterial ribonucleotide reductase nrd genes and operons by binding to NrdR-boxes. This is Transcriptional repressor NrdR from Shewanella loihica (strain ATCC BAA-1088 / PV-4).